Reading from the N-terminus, the 429-residue chain is Phosphoribosylamine--glycine ligase (429 aa).

An ATP-grasp domain is found at 109-316 (KDFLARHQIP…LVDLCLAACD (208 aa)). 135 to 196 (LREKGAPIVI…EEFLDGEEAS (62 aa)) lines the ATP pocket. Mg(2+) is bound by residues Glu286 and Asn288.

This sequence belongs to the GARS family. As to quaternary structure, monomer. Requires Mg(2+) as cofactor. Mn(2+) is required as a cofactor.

It carries out the reaction 5-phospho-beta-D-ribosylamine + glycine + ATP = N(1)-(5-phospho-beta-D-ribosyl)glycinamide + ADP + phosphate + H(+). It participates in purine metabolism; IMP biosynthesis via de novo pathway; N(1)-(5-phospho-D-ribosyl)glycinamide from 5-phospho-alpha-D-ribose 1-diphosphate: step 2/2. This is Phosphoribosylamine--glycine ligase from Salmonella typhimurium (strain LT2 / SGSC1412 / ATCC 700720).